Here is a 1071-residue protein sequence, read N- to C-terminus: ATP-dependent helicase/deoxyribonuclease subunit B (1071 aa).

Belongs to the helicase family. AddB/RexB type 2 subfamily. Heterodimer of AddA and RexB. It depends on Mg(2+) as a cofactor.

In terms of biological role, the heterodimer acts as both an ATP-dependent DNA helicase and an ATP-dependent, dual-direction single-stranded exonuclease. Recognizes the chi site generating a DNA molecule suitable for the initiation of homologous recombination. This subunit has 5' -&gt; 3' nuclease activity but not helicase activity. This chain is ATP-dependent helicase/deoxyribonuclease subunit B, found in Streptococcus pyogenes serotype M12 (strain MGAS2096).